The sequence spans 769 residues: Integrin beta-2 (769 aa).

The N-terminal stretch at 1–22 (MLRQRPQLLLLAGLLALQSVLS) is a signal peptide. The residue at position 23 (Gln-23) is a Pyrrolidone carboxylic acid. Over 23–700 (QECTNYKVST…DMLECVKGPN (678 aa)) the chain is Extracellular. The PSI domain occupies 24–74 (ECTNYKVSTCRDCIESGPGCAWCQKLNFTGQGEPDSIRCDTRAELLSKGCP). Intrachain disulfides connect Cys-25/Cys-43, Cys-33/Cys-447, Cys-36/Cys-62, Cys-46/Cys-73, Cys-191/Cys-198, Cys-246/Cys-286, Cys-386/Cys-400, Cys-420/Cys-445, Cys-449/Cys-467, Cys-459/Cys-470, Cys-472/Cys-481, Cys-483/Cys-514, Cys-497/Cys-512, Cys-506/Cys-517, Cys-519/Cys-534, Cys-536/Cys-559, Cys-541/Cys-557, Cys-549/Cys-562, Cys-564/Cys-573, Cys-575/Cys-598, Cys-582/Cys-596, Cys-590/Cys-601, Cys-603/Cys-612, Cys-615/Cys-618, Cys-622/Cys-662, Cys-628/Cys-647, Cys-631/Cys-643, and Cys-670/Cys-695. Residues Asn-50 and Asn-116 are each glycosylated (N-linked (GlcNAc...) asparagine). Positions 124 to 363 (GYPIDLYYLM…ELIKNAYNKL (240 aa)) constitute a VWFA domain. Residues Ser-136 and Ser-138 each contribute to the Mg(2+) site. 4 residues coordinate Ca(2+): Ser-138, Asp-141, Asp-142, and Asp-173. 4 residues coordinate Ca(2+): Asn-229, Asp-231, Pro-233, and Glu-234. Mg(2+) is bound at residue Glu-234. A glycan (N-linked (GlcNAc...) asparagine) is linked at Asn-254. The Ca(2+) site is built by Asp-264 and Glu-347. Residues 397-399 (RGD) carry the Cell attachment site motif. I-EGF domains lie at 449–482 (CRDA…KNCE), 483–535 (CQTQ…QFCE), 536–574 (CDNV…SACQ), and 575–613 (CLKS…PLCS). The N-linked (GlcNAc...) asparagine glycan is linked to Asn-501. The N-linked (GlcNAc...) asparagine glycan is linked to Asn-642. The helical transmembrane segment at 701–723 (IAAIVGGTVGGVVLVGILLLVIW) threads the bilayer. Residues 724–769 (KALTHLSDLREYHRFEKEKLKSQWNNDNPLFKSATTTVMNPKFAES) lie on the Cytoplasmic side of the membrane. Residues Ser-745 and Ser-756 each carry the phosphoserine modification. Phosphothreonine occurs at positions 758 and 760.

It belongs to the integrin beta chain family. Heterodimer of an alpha and a beta subunit. The ITGB2 beta subunit associates with the ITGAL, ITGAM, ITGAX or ITGAD alpha subunits. Found in a complex with CD177 and ITGAM/CD11b. Interacts with FGR. Interacts with COPS5 and RANBP9. Interacts with FLNA (via filamin repeats 4, 9, 12, 17, 19, 21, and 23). Interacts with THBD. Post-translationally, both Ser-745 and Ser-756 become phosphorylated when T-cells are exposed to phorbol esters. Phosphorylation on Thr-758 (but not on Ser-756) allows interaction with 14-3-3 proteins.

Its subcellular location is the cell membrane. It localises to the membrane raft. Integrin ITGAL/ITGB2 is a receptor for ICAM1, ICAM2, ICAM3 and ICAM4. Integrin ITGAL/ITGB2 is also a receptor for the secreted form of ubiquitin-like protein ISG15; the interaction is mediated by ITGAL. Integrins ITGAM/ITGB2 and ITGAX/ITGB2 are receptors for the iC3b fragment of the third complement component and for fibrinogen. Integrin ITGAX/ITGB2 recognizes the sequence G-P-R in fibrinogen alpha-chain. Integrin ITGAM/ITGB2 recognizes P1 and P2 peptides of fibrinogen gamma chain. Integrin ITGAM/ITGB2 is also a receptor for factor X. Integrin ITGAD/ITGB2 is a receptor for ICAM3 and VCAM1. Contributes to natural killer cell cytotoxicity. Involved in leukocyte adhesion and transmigration of leukocytes including T-cells and neutrophils. Triggers neutrophil transmigration during lung injury through PTK2B/PYK2-mediated activation. Integrin ITGAL/ITGB2 in association with ICAM3, contributes to apoptotic neutrophil phagocytosis by macrophages. The polypeptide is Integrin beta-2 (ITGB2) (Bos taurus (Bovine)).